The primary structure comprises 362 residues: Probable protein phosphatase 2C 11 (362 aa).

Residues 23–329 (KLGLSSMQGW…DNMTMVLVQF (307 aa)) enclose the PPM-type phosphatase domain. The Mn(2+) site is built by Asp-57, Gly-58, Asp-272, and Asp-320.

It belongs to the PP2C family. The cofactor is Mg(2+). Requires Mn(2+) as cofactor.

It catalyses the reaction O-phospho-L-seryl-[protein] + H2O = L-seryl-[protein] + phosphate. The catalysed reaction is O-phospho-L-threonyl-[protein] + H2O = L-threonyl-[protein] + phosphate. In Oryza sativa subsp. japonica (Rice), this protein is Probable protein phosphatase 2C 11.